The following is a 278-amino-acid chain: Phosphonates import ATP-binding protein PhnC 2 (278 aa).

Residues 5–253 (IRVDSLNKTF…FLNELYGAEG (249 aa)) form the ABC transporter domain. 37 to 44 (GASGSGKS) contacts ATP.

It belongs to the ABC transporter superfamily. Phosphonates importer (TC 3.A.1.9.1) family. The complex is composed of two ATP-binding proteins (PhnC), two transmembrane proteins (PhnE) and a solute-binding protein (PhnD).

The protein resides in the cell inner membrane. The enzyme catalyses phosphonate(out) + ATP + H2O = phosphonate(in) + ADP + phosphate + H(+). In terms of biological role, part of the ABC transporter complex PhnCDE involved in phosphonates import. Responsible for energy coupling to the transport system. This chain is Phosphonates import ATP-binding protein PhnC 2, found in Pseudomonas aeruginosa (strain ATCC 15692 / DSM 22644 / CIP 104116 / JCM 14847 / LMG 12228 / 1C / PRS 101 / PAO1).